A 274-amino-acid chain; its full sequence is tRNA-cytidine(32) 2-sulfurtransferase (274 aa).

The short motif at 40-45 is the PP-loop motif element; the sequence is SGGKDS. [4Fe-4S] cluster contacts are provided by C115, C118, and C206.

This sequence belongs to the TtcA family. Homodimer. Mg(2+) serves as cofactor. The cofactor is [4Fe-4S] cluster.

It localises to the cytoplasm. The enzyme catalyses cytidine(32) in tRNA + S-sulfanyl-L-cysteinyl-[cysteine desulfurase] + AH2 + ATP = 2-thiocytidine(32) in tRNA + L-cysteinyl-[cysteine desulfurase] + A + AMP + diphosphate + H(+). It functions in the pathway tRNA modification. Catalyzes the ATP-dependent 2-thiolation of cytidine in position 32 of tRNA, to form 2-thiocytidine (s(2)C32). The sulfur atoms are provided by the cysteine/cysteine desulfurase (IscS) system. The polypeptide is tRNA-cytidine(32) 2-sulfurtransferase (Pseudomonas fluorescens (strain SBW25)).